The sequence spans 746 residues: GTPase-activating protein GYP7 (746 aa).

Phosphoserine occurs at positions 265 and 339. One can recognise a Rab-GAP TBC domain in the interval 385–633 (LENDSLRGKV…HIWENFWTFY (249 aa)). The interval 470-505 (TIDGLPPPPQQLPANENNSTSPESANDESDDADDGV) is disordered. The segment covering 481-491 (LPANENNSTSP) has biased composition (polar residues).

The protein resides in the cytoplasm. In terms of biological role, GTPase-activating protein (GAP) that most effectively accelerates the intrinsic GTPase activity of Ypt/Rab-type GTPase YPT7 involved in vacuole docking and fusion. It is also active, but to a lesser extent, on YPT31, YPT32, YPT1, YPT6 and SEC4. Provides a catalytic arginine (arginine finger) in trans to accelerate the GTP hydrolysis rate of the substrate GTPase. In Saccharomyces cerevisiae (strain ATCC 204508 / S288c) (Baker's yeast), this protein is GTPase-activating protein GYP7 (GYP7).